Reading from the N-terminus, the 498-residue chain is Putative phosphotransferase 057R (498 aa).

This Dryophytes versicolor (chameleon treefrog) protein is Putative phosphotransferase 057R.